The primary structure comprises 301 residues: MKNNHIPVLLNEVLDNLALKENGIYIDLTLGMGGHSKEILKRIPKGKLIAFDKDDFAIKNASKTLSEVANNFEIIKSDFKDFKEELSNLGIYKVDGILADLGISSPQIDNAERGFSYLKNSALDMRMDQSQKLSAYDVVNLYPVEKLEYILKTYGEVKNYKYIASKIIEARPINTTLELANLIKSVTPQKLLKLKNPAKNVFQAIRIEVNNELDSIHQMLSSVEDLLKVNASLLIISFHSLEDKIVKNYFQELTKPKLPSKMPIQEDKFFATRRIYPSKQELNLNSRSKSAKLRILTKIKD.

S-adenosyl-L-methionine contacts are provided by residues 33–35 (GGH), aspartate 52, phenylalanine 79, aspartate 100, and glutamine 107.

This sequence belongs to the methyltransferase superfamily. RsmH family.

The protein resides in the cytoplasm. The enzyme catalyses cytidine(1402) in 16S rRNA + S-adenosyl-L-methionine = N(4)-methylcytidine(1402) in 16S rRNA + S-adenosyl-L-homocysteine + H(+). Functionally, specifically methylates the N4 position of cytidine in position 1402 (C1402) of 16S rRNA. This is Ribosomal RNA small subunit methyltransferase H from Mycoplasmopsis synoviae (strain 53) (Mycoplasma synoviae).